Consider the following 414-residue polypeptide: Ena/VASP-like protein (414 aa).

Residues 1–112 (MSEQSICQAR…NAMLFALNIM (112 aa)) form the WH1 domain. Position 130 is a phosphoserine (Ser130). The segment at 157–369 (ATGPILPPGH…SRVKPAGSVN (213 aa)) is disordered. The span at 179–204 (GPPPPPPPPVPPPPTGSTPPPPPPLP) shows a compositional bias: pro residues. The span at 217 to 228 (SASGLAAALAGA) shows a compositional bias: low complexity. The EVH2 block A stretch occupies residues 220–240 (GLAAALAGAKLRRVQRPEDAS). Positions 220-411 (GLAAALAGAK…DAIRQELSGI (192 aa)) are EVH2. A KLKR motif is present at residues 229 to 232 (KLRR). Low complexity predominate over residues 240–251 (SGGSSPSGTSKS). 2 positions are modified to phosphoserine: Ser244 and Ser257. The interval 263 to 280 (GGLMEEMNKLLAKRRKAA) is EVH2 block B. The segment covering 297-318 (EDPSTSPSPGTRATSQPPNSSE) has biased composition (polar residues). Phosphoserine occurs at positions 302, 304, 327, 329, 339, 347, 352, and 367. Residues 319–329 (AGRKPWERSNS) show a composition bias toward basic and acidic residues. The tract at residues 340-360 (RTPSVAKSPEAKSPLQSQPHS) is required for interaction with ZDHHC17. Positions 377–411 (DLDRMKQEILEEVVRELHKVKEEIIDAIRQELSGI) are EVH2 block C.

It belongs to the Ena/VASP family. Homotetramer. Binds to the SH3 domains of ABL1, LYN and SRC. Also binds to profilin, with preference for isoform IIa of PFN2, and the WW domain of APBB1/FE65. Binds to SEMA6A. Interacts, via the Pro-rich region, with the C-terminal SH3 domain of DNMBP. Interacts with RAPH1. Binds, via the EVH1 domain, the Pro-rich domain of Listeria monocytogenes actA. Binds, via the EVH1 domain, the Pro-rich domain of ZYX. Interacts with FYB1. Interacts with ZDHHC17. Post-translationally, phosphorylated by PKA; phosphorylation abolishes binding to SH3 domains of ABL and SRC. As to expression, highest expression in thymus and spleen (at protein level). Low levels in placenta, ovary, testis, fat and lung (at protein level). Isoform 1 and isoform 2 are expressed in cortical neurons and glial cells.

It localises to the cytoplasm. The protein resides in the cytoskeleton. It is found in the stress fiber. Its subcellular location is the cell projection. The protein localises to the lamellipodium. Ena/VASP proteins are actin-associated proteins involved in a range of processes dependent on cytoskeleton remodeling and cell polarity such as axon guidance and lamellipodial and filopodial dynamics in migrating cells. EVL enhances actin nucleation and polymerization. The polypeptide is Ena/VASP-like protein (Evl) (Mus musculus (Mouse)).